A 602-amino-acid chain; its full sequence is Glutamine--fructose-6-phosphate aminotransferase [isomerizing] (602 aa).

The active-site Nucleophile; for GATase activity is C2. The 216-residue stretch at 2–217 folds into the Glutamine amidotransferase type-2 domain; that stretch reads CGIVGVVGNT…DQELVIVKAD (216 aa). The disordered stretch occupies residues 67-87; sequence IGHTRWATHGKPTEDNAHPHR. Positions 77-87 are enriched in basic and acidic residues; it reads KPTEDNAHPHR. 2 SIS domains span residues 283–422 and 455–592; these read IIKA…ANGN and VREL…VDKP. K597 serves as the catalytic For Fru-6P isomerization activity.

In terms of assembly, homodimer.

Its subcellular location is the cytoplasm. The enzyme catalyses D-fructose 6-phosphate + L-glutamine = D-glucosamine 6-phosphate + L-glutamate. Its function is as follows. Catalyzes the first step in hexosamine metabolism, converting fructose-6P into glucosamine-6P using glutamine as a nitrogen source. This Streptococcus pneumoniae serotype 4 (strain ATCC BAA-334 / TIGR4) protein is Glutamine--fructose-6-phosphate aminotransferase [isomerizing].